A 64-amino-acid chain; its full sequence is Makatoxin-1 (64 aa).

The 63-residue stretch at 2 to 64 (RDAYIADSEN…VPIRISGSCR (63 aa)) folds into the LCN-type CS-alpha/beta domain. 4 disulfides stabilise this stretch: C12–C63, C16–C36, C22–C46, and C26–C48.

In terms of tissue distribution, expressed by the venom gland.

It is found in the secreted. This protein markedly relaxes the rat carbachol-precontracted anococcygeus muscle. This relaxation is inhibited by the inhibitor of nitric oxide (NO) synthase, N-nitro-L-arginine methyl ester (L-NAME), suggesting that the response induced by this protein is NO-mediated. This chain is Makatoxin-1, found in Olivierus martensii (Manchurian scorpion).